A 434-amino-acid chain; its full sequence is ATP-dependent protease ATPase subunit HslU (434 aa).

Residues Val18, 60–65 (GVGKTE), Asp247, Glu312, and Arg384 contribute to the ATP site.

This sequence belongs to the ClpX chaperone family. HslU subfamily. A double ring-shaped homohexamer of HslV is capped on each side by a ring-shaped HslU homohexamer. The assembly of the HslU/HslV complex is dependent on binding of ATP.

It is found in the cytoplasm. Functionally, ATPase subunit of a proteasome-like degradation complex; this subunit has chaperone activity. The binding of ATP and its subsequent hydrolysis by HslU are essential for unfolding of protein substrates subsequently hydrolyzed by HslV. HslU recognizes the N-terminal part of its protein substrates and unfolds these before they are guided to HslV for hydrolysis. The sequence is that of ATP-dependent protease ATPase subunit HslU from Bradyrhizobium sp. (strain BTAi1 / ATCC BAA-1182).